An 80-amino-acid chain; its full sequence is WAP four-disulfide core domain protein 15B (80 aa).

A signal peptide spans 1-20 (MKLLGLSLLAVTILLCCNMA). A WAP domain is found at 29 to 76 (VFSKPGYCPEYRVPCPFVLIPKCRRDKGCKDALKCCFFYCQMRCVDPW). 4 cysteine pairs are disulfide-bonded: Cys36-Cys64, Cys43-Cys68, Cys51-Cys63, and Cys57-Cys72.

In terms of tissue distribution, constitutively expressed in kidney and epididymis.

The protein localises to the secreted. Antibacterial protein which inhibits the growth of E.coli and S.aureus. In Mus musculus (Mouse), this protein is WAP four-disulfide core domain protein 15B (Wfdc15b).